The primary structure comprises 209 residues: A-type ATP synthase subunit D (209 aa).

Belongs to the V-ATPase D subunit family. In terms of assembly, has multiple subunits with at least A(3), B(3), C, D, E, F, H, I and proteolipid K(x).

Its subcellular location is the cell membrane. Component of the A-type ATP synthase that produces ATP from ADP in the presence of a proton gradient across the membrane. The polypeptide is A-type ATP synthase subunit D (Archaeoglobus fulgidus (strain ATCC 49558 / DSM 4304 / JCM 9628 / NBRC 100126 / VC-16)).